Reading from the N-terminus, the 271-residue chain is Calretinin (271 aa).

EF-hand domains follow at residues 16–51 (LTAT…LEKA), 63–98 (NLGE…EENF), 107–142 (GSST…LLKK), 151–186 (KLQE…QENF), 195–230 (LTSE…LYEK), and 235–270 (MNIQ…SEPP). 25 residues coordinate Ca(2+): D29, D31, N33, Y35, E40, D76, N78, D80, K82, E87, D120, D122, S124, Y126, E131, D164, N166, D168, K170, E175, D208, D210, S212, Y214, and E219. Y214 carries the phosphotyrosine modification.

It belongs to the calbindin family.

The protein localises to the synapse. The protein resides in the cell projection. It localises to the dendrite. Calcium-binding protein involved in calcium homeostasis and signal transduction. It plays a critical role in buffering intracellular calcium levels and modulating calcium-dependent signaling pathways. Predominantly expressed in specific neuronal populations, influences synaptic plasticity and neuronal excitability, contributing to learning and memory. During embryonic development, it facilitates neuronal differentiation and maturation. This is Calretinin (CALB2) from Bos taurus (Bovine).